The following is a 119-amino-acid chain: Ribonuclease P protein component (119 aa).

It belongs to the RnpA family. Consists of a catalytic RNA component (M1 or rnpB) and a protein subunit.

It catalyses the reaction Endonucleolytic cleavage of RNA, removing 5'-extranucleotides from tRNA precursor.. In terms of biological role, RNaseP catalyzes the removal of the 5'-leader sequence from pre-tRNA to produce the mature 5'-terminus. It can also cleave other RNA substrates such as 4.5S RNA. The protein component plays an auxiliary but essential role in vivo by binding to the 5'-leader sequence and broadening the substrate specificity of the ribozyme. This is Ribonuclease P protein component from Yersinia pseudotuberculosis serotype O:1b (strain IP 31758).